Reading from the N-terminus, the 1109-residue chain is Protein translocase subunit SecA (1109 aa).

ATP-binding positions include Q175, 193-197 (GEGKT), and D695. Positions 1038–1109 (VRQAAPEQRQ…KYKNCHGRNS (72 aa)) are disordered. Basic and acidic residues-rich tracts occupy residues 1045–1059 (QRQDMSKYREQKQDL) and 1071–1088 (DTREAVKREPIRAEKTVG). C1093, C1095, C1104, and H1105 together coordinate Zn(2+). Basic residues predominate over residues 1099-1109 (KKYKNCHGRNS).

This sequence belongs to the SecA family. As to quaternary structure, monomer and homodimer. Part of the essential Sec protein translocation apparatus which comprises SecA, SecYEG and auxiliary proteins SecDF. Other proteins may also be involved. Zn(2+) serves as cofactor.

Its subcellular location is the cell inner membrane. It is found in the cytoplasm. It catalyses the reaction ATP + H2O + cellular proteinSide 1 = ADP + phosphate + cellular proteinSide 2.. Its function is as follows. Part of the Sec protein translocase complex. Interacts with the SecYEG preprotein conducting channel. Has a central role in coupling the hydrolysis of ATP to the transfer of proteins into and across the cell membrane, serving as an ATP-driven molecular motor driving the stepwise translocation of polypeptide chains across the membrane. This Bacteroides fragilis (strain ATCC 25285 / DSM 2151 / CCUG 4856 / JCM 11019 / LMG 10263 / NCTC 9343 / Onslow / VPI 2553 / EN-2) protein is Protein translocase subunit SecA.